The sequence spans 121 residues: Small ribosomal subunit protein uS13 (121 aa).

Positions Arg-93–Lys-121 are disordered.

This sequence belongs to the universal ribosomal protein uS13 family. In terms of assembly, part of the 30S ribosomal subunit. Forms a loose heterodimer with protein S19. Forms two bridges to the 50S subunit in the 70S ribosome.

In terms of biological role, located at the top of the head of the 30S subunit, it contacts several helices of the 16S rRNA. In the 70S ribosome it contacts the 23S rRNA (bridge B1a) and protein L5 of the 50S subunit (bridge B1b), connecting the 2 subunits; these bridges are implicated in subunit movement. Contacts the tRNAs in the A and P-sites. The sequence is that of Small ribosomal subunit protein uS13 from Ligilactobacillus salivarius (strain UCC118) (Lactobacillus salivarius).